We begin with the raw amino-acid sequence, 480 residues long: Cysteine--tRNA ligase (480 aa).

C29 serves as a coordination point for Zn(2+). The short motif at 31–41 (ITVYDYCHLGH) is the 'HIGH' region element. 3 residues coordinate Zn(2+): C215, H240, and E244. A 'KMSKS' region motif is present at residues 272–276 (KMSKS). K275 serves as a coordination point for ATP.

It belongs to the class-I aminoacyl-tRNA synthetase family. Monomer. Zn(2+) is required as a cofactor.

It localises to the cytoplasm. The enzyme catalyses tRNA(Cys) + L-cysteine + ATP = L-cysteinyl-tRNA(Cys) + AMP + diphosphate. This chain is Cysteine--tRNA ligase, found in Microcystis aeruginosa (strain NIES-843 / IAM M-2473).